The chain runs to 149 residues: Calmodulin-6 (149 aa).

EF-hand domains follow at residues 8–43, 44–79, 81–116, and 117–149; these read DQIS…LGQN, PTEA…KMKD, DSEE…LGEK, and LSDE…MMAK. Residues Asp-21, Asp-23, Asp-25, Cys-27, Glu-32, Asp-57, Asp-59, Asn-61, Thr-63, Glu-68, Asp-94, Asp-96, Asn-98, Glu-105, Asp-130, Asp-132, Asp-134, Gln-136, and Glu-141 each coordinate Ca(2+).

The protein belongs to the calmodulin family. As to quaternary structure, interacts with KCBP.

Its function is as follows. Calmodulin mediates the control of a large number of enzymes, ion channels and other proteins by Ca(2+). Among the enzymes to be stimulated by the calmodulin-Ca(2+) complex are a number of protein kinases and phosphatases. This Arabidopsis thaliana (Mouse-ear cress) protein is Calmodulin-6 (CAM6).